We begin with the raw amino-acid sequence, 638 residues long: Broad-specificity ulvan lyase (638 aa).

The N-terminal stretch at 1-27 (MKRRNFIQLSSLATIGMSLPSAGIVNA) is a signal peptide.

Belongs to the polysaccharide lyase 37 family.

The protein resides in the periplasm. It catalyses the reaction Endolytic cleavage of (1-&gt;4)-beta-galactosaminic bonds between N-acetylgalactosamine and either D-glucuronic acid or L-iduronic acid to produce a mixture of Delta(4)-unsaturated oligosaccharides of different sizes that are ultimately degraded to Delta(4)-unsaturated tetra- and disaccharides.. The enzyme catalyses Elimination of sulfate, appears to act on linkages between N-acetyl-D-glucosamine and uronate. Product is an unsaturated sugar.. Functionally, broad-specificity lyase involved in ulvan degradation. Ulvan is the main polysaccharide component of the Ulvales (green seaweed) cell wall. It is composed of disaccharide building blocks comprising 3-sulfated rhamnose (Rha3S) linked to D-glucuronic acid (GlcA), L-iduronic acid (IduA), or D-xylose (Xyl). Ulvan lyase catalyzes the endolytic cleavage of the glycosidic bond between Rha3S and the uronic acids GlcA or IduA, producing oligosaccharides that have unsaturated 4-deoxy-L-threo-hex-4-enopyranosiduronic acid (deltaUA) at the non-reducing end. This results eventually in the degradation of the ulvan polysaccharide into deltaUA-Rha3S disaccharides and deltaUA-Rha3S-Xyl-Rha3S tetrasaccharides. It is also able to degrade the glycosaminoglycans heparan sulfate and chondroitin sulfate. Not active against pectin, xanthan or alginate. The sequence is that of Broad-specificity ulvan lyase from Formosa agariphila (strain DSM 15362 / KCTC 12365 / LMG 23005 / KMM 3901 / M-2Alg 35-1).